The following is a 192-amino-acid chain: A-type ATP synthase subunit E (192 aa).

The protein belongs to the V-ATPase E subunit family. In terms of assembly, has multiple subunits with at least A(3), B(3), C, D, E, F, H, I and proteolipid K(x).

The protein resides in the cell membrane. Component of the A-type ATP synthase that produces ATP from ADP in the presence of a proton gradient across the membrane. The sequence is that of A-type ATP synthase subunit E from Sulfolobus acidocaldarius (strain ATCC 33909 / DSM 639 / JCM 8929 / NBRC 15157 / NCIMB 11770).